The primary structure comprises 900 residues: 3'-5' exonuclease DinG (900 aa).

Positions 8–161 (VVDLETTGNQ…DEDATTTALL (154 aa)) constitute an Exonuclease domain. Residues 241–496 (SEVVKSLNLT…KAIDKLEQQR (256 aa)) form the Helicase ATP-binding domain. 276 to 283 (APLGSGKS) provides a ligand contact to ATP. The short motif at 448 to 451 (DEAH) is the DEAH box element. The Helicase C-terminal domain maps to 713-893 (DYIQEYVTIT…QFSKLVNKIQ (181 aa)).

The protein belongs to the helicase family. DinG subfamily. Type 2 sub-subfamily.

Functionally, 3'-5' exonuclease. The sequence is that of 3'-5' exonuclease DinG from Staphylococcus haemolyticus (strain JCSC1435).